The sequence spans 134 residues: Arsenate reductase (134 aa).

Active-site nucleophile residues include C11, C83, and C90. Cystine bridges form between C11–C83 and C83–C90.

This sequence belongs to the low molecular weight phosphotyrosine protein phosphatase family. Thioredoxin-coupled ArsC subfamily.

The protein localises to the cytoplasm. The catalysed reaction is arsenate + [thioredoxin]-dithiol + H(+) = arsenite + [thioredoxin]-disulfide + H2O. Functionally, catalyzes the reduction of arsenate [As(V)] to arsenite [As(III)]. This is Arsenate reductase from Brevibacillus brevis (strain 47 / JCM 6285 / NBRC 100599).